Reading from the N-terminus, the 338-residue chain is Protein mono-ADP-ribosyltransferase PARP11 (338 aa).

ADP-ribosyl glutamic acid is present on Glu-13. An N6-(ADP-ribosyl)lysine modification is found at Lys-18. The region spanning 22–106 (NEVDDMDTSD…TTGKQRLIKR (85 aa)) is the WWE domain. Cys-56 and Cys-72 each carry ADP-ribosylcysteine. Asp-87 bears the ADP-ribosyl aspartic acid mark. The PARP catalytic domain maps to 123–338 (IPMPPHWENV…IYPEYLIDFH (216 aa)).

The protein belongs to the ARTD/PARP family. As to quaternary structure, interacts with PARP12; this interaction plays a role in zika virus suppression. Post-translationally, auto-mono-ADP-ribosylated.

It localises to the nucleus. The protein resides in the nuclear pore complex. The enzyme catalyses L-aspartyl-[protein] + NAD(+) = 4-O-(ADP-D-ribosyl)-L-aspartyl-[protein] + nicotinamide. The catalysed reaction is L-cysteinyl-[protein] + NAD(+) = S-(ADP-D-ribosyl)-L-cysteinyl-[protein] + nicotinamide + H(+). It catalyses the reaction L-glutamyl-[protein] + NAD(+) = 5-O-(ADP-D-ribosyl)-L-glutamyl-[protein] + nicotinamide. It carries out the reaction L-lysyl-[protein] + NAD(+) = N(6)-(ADP-D-ribosyl)-L-lysyl-[protein] + nicotinamide + H(+). In terms of biological role, mono-ADP-ribosyltransferase that mediates mono-ADP-ribosylation of target proteins. Plays a role in nuclear envelope stability and nuclear remodeling during spermiogenesis. Inhibits the type I interferon activated signaling pathway. Mechanistically, mono-ADP-ribosylates beta-TrCP/BTRC to promote IFNAR1 ubiquitination and protect BTRC from ubiquitin-proteasome degradation. Additionally, acts as an antiviral factor by cooperating with PARP12 to suppress Zika virus replication, independent of IFNAR1 regulation or intrinsic PARP enzymatic activity. Instead, facilitates the degradation of viral NS1 and NS3 proteins, potentially disrupting viral replication. The chain is Protein mono-ADP-ribosyltransferase PARP11 from Homo sapiens (Human).